Reading from the N-terminus, the 173-residue chain is Urease accessory protein UreE (173 aa).

Residues 136-173 (PEGGAYAGSGQDHHDHSHGEHTQGEHTHDEAAEPHHHG) form a disordered region. The segment covering 146 to 173 (QDHHDHSHGEHTQGEHTHDEAAEPHHHG) has biased composition (basic and acidic residues).

Belongs to the UreE family.

It localises to the cytoplasm. Its function is as follows. Involved in urease metallocenter assembly. Binds nickel. Probably functions as a nickel donor during metallocenter assembly. The chain is Urease accessory protein UreE from Beijerinckia indica subsp. indica (strain ATCC 9039 / DSM 1715 / NCIMB 8712).